A 552-amino-acid polypeptide reads, in one-letter code: Glutamate--tRNA ligase (552 aa).

Positions 102 to 112 (PNPSGPLHIGH) match the 'HIGH' region motif.

Belongs to the class-I aminoacyl-tRNA synthetase family. Glutamate--tRNA ligase type 2 subfamily.

The protein localises to the cytoplasm. It catalyses the reaction tRNA(Glu) + L-glutamate + ATP = L-glutamyl-tRNA(Glu) + AMP + diphosphate. Its function is as follows. Catalyzes the attachment of glutamate to tRNA(Glu) in a two-step reaction: glutamate is first activated by ATP to form Glu-AMP and then transferred to the acceptor end of tRNA(Glu). The sequence is that of Glutamate--tRNA ligase from Methanothermobacter marburgensis (strain ATCC BAA-927 / DSM 2133 / JCM 14651 / NBRC 100331 / OCM 82 / Marburg) (Methanobacterium thermoautotrophicum).